The chain runs to 291 residues: MAGTKEIRTKIKSVQNTRKITKAMEMVAASKMRKAQERMRNARPYAEKVRNIAAHLASANPEFKHPFMVARDVKRAGMIVVTTDKGLCGGLNTNVLRAVTNELKDLQGQGVNVQATAIGTKGMQFLGRIGAKVVSHVVQLGDTPHLEKLIGAIKVQLDAYTNGEVDAVYLAYTKFINTMKQEPMVEQLLPLAADKLSQTEDEKRAYSWDYIYEPDAQTVVEELLVRYVEALVYQAVAENMASEQSARMVAMKAASDNAKNVIGELQLVYNKTRQAAITKELSEIVSGAAAV.

The protein belongs to the ATPase gamma chain family. In terms of assembly, F-type ATPases have 2 components, CF(1) - the catalytic core - and CF(0) - the membrane proton channel. CF(1) has five subunits: alpha(3), beta(3), gamma(1), delta(1), epsilon(1). CF(0) has three main subunits: a, b and c.

Its subcellular location is the cell inner membrane. In terms of biological role, produces ATP from ADP in the presence of a proton gradient across the membrane. The gamma chain is believed to be important in regulating ATPase activity and the flow of protons through the CF(0) complex. In Cupriavidus metallidurans (strain ATCC 43123 / DSM 2839 / NBRC 102507 / CH34) (Ralstonia metallidurans), this protein is ATP synthase gamma chain.